A 764-amino-acid polypeptide reads, in one-letter code: Thyrotropin receptor (764 aa).

Residues 1–21 form the signal peptide; it reads MRPGSLLLLVLLLALSRSLRG. Topologically, residues 22 to 413 are extracellular; it reads KECASPPCEC…EFNPCEDIMG (392 aa). A disulfide bridge connects residues C31 and C41. N77 and N99 each carry an N-linked (GlcNAc...) asparagine glycan. LRR repeat units follow at residues 100–124, 125–150, 151–174, 176–199, 200–223, 225–248, and 264–288; these read LSKMTHIEIRNTRSLTYIDPDALTE, LPLLKFLGIFNTGLRIFPDLTKIYST, DIFFILEITDNPYMTSVPENAFQG, CNETLTLKLYNNGFTSVQGHAFNG, TKLDAVYLNKNKYLTAIDNDAFGG, YSGPTLLDVSSTSVTALPSKGLEH, and PLSLSFLHLTRADLSYPSHCCAFKN. N177 and N198 each carry an N-linked (GlcNAc...) asparagine glycan. N-linked (GlcNAc...) asparagine glycosylation occurs at N302. Y385 is modified (sulfotyrosine). Residues 414-441 traverse the membrane as a helical segment; it reads YRFLRIVVWFVSLLALLGNIFVLLILLT. Over 442 to 450 the chain is Cytoplasmic; the sequence is SHYKLTVPR. Residues 451-473 form a helical membrane-spanning segment; it reads FLMCNLAFADFCMGVYLLLIASV. At 474–494 the chain is on the extracellular side; sequence DLYTHSEYYNHAIDWQTGPGC. The cysteines at positions 494 and 569 are disulfide-linked. A helical transmembrane segment spans residues 495-517; the sequence is NTAGFFTVFASELSVYTLTVITL. Over 518–537 the chain is Cytoplasmic; it reads ERWYAITFAMRLDRKIRLRH. The chain crosses the membrane as a helical span at residues 538-560; that stretch reads AYTIMAGGWVSCFLLALLPMVGI. The Extracellular portion of the chain corresponds to 561-580; the sequence is SSYAKVSICLPMDTDTPLAL. Residues 581–602 traverse the membrane as a helical segment; it reads AYIVLVLLLNVVAFVVVCSCYV. Topologically, residues 603–625 are cytoplasmic; it reads KIYITVRNPQYNPRDKDTKIAKR. A helical transmembrane segment spans residues 626–649; it reads MAVLIFTDFMCMAPISFYALSALM. The Extracellular portion of the chain corresponds to 650-660; sequence NKPLITVTNSK. A helical membrane pass occupies residues 661-682; that stretch reads ILLVLFYPLNSCANPFLYAIFT. The Cytoplasmic portion of the chain corresponds to 683–764; sequence KAFQRDVFIL…ISEEYKQTAL (82 aa). Residues 762–764 carry the PDZ-binding motif; sequence TAL.

Belongs to the G-protein coupled receptor 1 family. FSH/LSH/TSH subfamily. As to quaternary structure, interacts with heterodimer GPHA2:GPHB5; this interaction stimulates cAMP production. Interacts (via the PDZ-binding motif) with SCRIB; regulates TSHR trafficking and function. Post-translationally, glycosylated. Sulfated. Sulfation on Tyr-385 plays a role in thyrotropin receptor binding and activation.

The protein localises to the cell membrane. The protein resides in the basolateral cell membrane. Its function is as follows. Receptor for the thyroid-stimulating hormone (TSH) or thyrotropin. Also acts as a receptor for the heterodimeric glycoprotein hormone (GPHA2:GPHB5) or thyrostimulin. The activity of this receptor is mediated by G proteins which activate adenylate cyclase. Plays a central role in controlling thyroid cell metabolism. The protein is Thyrotropin receptor (Tshr) of Mus musculus (Mouse).